Consider the following 362-residue polypeptide: MPSTLQVLAKKVLALEHKENDHISREYYYHILKCCGLWWHEAPIILCFNGSKQMMIKTPIFEEGILLNTALMKAVQDNNYELIKLFTEWGANINYGLISINTEYTRDLCRKLGAKERLERHEVIQIMFKILDDTTSSNMILCHELFTNNPLLENVNMGQMRMIIHWRMKNLTDLLLNNNSISEILTKFWYGIAVKYNLKDAIQYFYQRFINFNEWRVTCALSFNNVNDLHKMYITERVHMNNDEMMNLACSIQDKNFSTIYYCFLLGANINQAMFISVLNYNIFNIFFCIDLGADAFKEGKALAKQKGYNEIVEILSLDIIYSPNTDFSSKIKPEHISFLLKNFYPKNLYIFDRCKPGLYYP.

The stretch at 66-98 is one ANK repeat; it reads LLNTALMKAVQDNNYELIKLFTEWGANINYGLI.

Belongs to the asfivirus MGF 360 family.

Its function is as follows. Plays a role in virus cell tropism, and may be required for efficient virus replication in macrophages. The protein is Protein MGF 360-19R of Ornithodoros (relapsing fever ticks).